We begin with the raw amino-acid sequence, 315 residues long: Beta-carotene hydroxylase 1, chloroplastic (315 aa).

A chloroplast-targeting transit peptide spans 1–58 (MAAEISISASSRAICLQRNPFPAPKYFATAPPLLFFSPLTCNLDAILRSRRKPRLAAC). 2 helical membrane passes run 112 to 132 (YLVA…ISVY) and 146 to 166 (FSEM…MEYW). Positions 159–286 (AAIGMEYWAR…KFDGVPYGLF (128 aa)) constitute a Fatty acid hydroxylase domain. The Histidine box-1 signature appears at 171–176 (HRALWH). The short motif at 183–187 (HESHH) is the Histidine box-2 element. 2 helical membrane-spanning segments follow: residues 196–216 (LNDI…SFGF) and 222–242 (IPGL…AYMF). The Histidine box-3 signature appears at 244-249 (HDGLVH). Positions 270–274 (HQLHH) match the Histidine box-4 motif.

Belongs to the sterol desaturase family.

It localises to the plastid. The protein localises to the chloroplast membrane. The enzyme catalyses all-trans-beta-carotene + 4 reduced [2Fe-2S]-[ferredoxin] + 2 O2 + 4 H(+) = all-trans-zeaxanthin + 4 oxidized [2Fe-2S]-[ferredoxin] + 2 H2O. It catalyses the reaction all-trans-beta-carotene + 2 reduced [2Fe-2S]-[ferredoxin] + O2 + 2 H(+) = beta-cryptoxanthin + 2 oxidized [2Fe-2S]-[ferredoxin] + H2O. It carries out the reaction beta-cryptoxanthin + 2 reduced [2Fe-2S]-[ferredoxin] + O2 + 2 H(+) = all-trans-zeaxanthin + 2 oxidized [2Fe-2S]-[ferredoxin] + H2O. Inhibited by o-phenanthroline and 8-hydroxyquinoline. Functionally, nonheme diiron monooxygenase involved in the biosynthesis of xanthophylls. Specific for beta-ring hydroxylations of beta-carotene. Produces beta-cryptoxanthin and zeaxanthin. Uses ferredoxin as an electron donor. The protein is Beta-carotene hydroxylase 1, chloroplastic of Capsicum annuum (Capsicum pepper).